The chain runs to 182 residues: CKLF-like MARVEL transmembrane domain-containing protein 3 (182 aa).

A compositionally biased stretch (acidic residues) spans 1-12; the sequence is MWPPDPDPDPDP. Residues 1-21 are disordered; the sequence is MWPPDPDPDPDPEPAGGSRPG. Residues 36–155 enclose the MARVEL domain; that stretch reads FLCSLKGRLL…DFYLIFNDVA (120 aa). 3 consecutive transmembrane segments (helical) span residues 64–84, 101–121, and 131–151; these read ASAF…FLFA, MDFL…ITAI, and AAGV…YLIF.

This sequence belongs to the chemokine-like factor family. As to expression, expressed in the leukocytes, placenta and testis.

The protein resides in the membrane. In Homo sapiens (Human), this protein is CKLF-like MARVEL transmembrane domain-containing protein 3 (CMTM3).